The following is a 164-amino-acid chain: 3-hydroxyacyl-[acyl-carrier-protein] dehydratase FabZ (164 aa).

His-70 is a catalytic residue.

This sequence belongs to the thioester dehydratase family. FabZ subfamily.

The protein resides in the cytoplasm. The catalysed reaction is a (3R)-hydroxyacyl-[ACP] = a (2E)-enoyl-[ACP] + H2O. Its function is as follows. Involved in unsaturated fatty acids biosynthesis. Catalyzes the dehydration of short chain beta-hydroxyacyl-ACPs and long chain saturated and unsaturated beta-hydroxyacyl-ACPs. This Synechocystis sp. (strain ATCC 27184 / PCC 6803 / Kazusa) protein is 3-hydroxyacyl-[acyl-carrier-protein] dehydratase FabZ.